The following is a 226-amino-acid chain: Neuromodulin (226 aa).

The disordered stretch occupies residues 1 to 226; the sequence is MLCCMRRTKQ…EDPEADQEHA (226 aa). 2 S-palmitoyl cysteine lipidation sites follow: cysteine 3 and cysteine 4. Residues 9-32 are compositionally biased toward basic and acidic residues; sequence KQVEKNDEDQKIEQDGVKPEDKAH. The IQ domain maps to 31-60; sequence AHKAATKIQASFRGHITRKKLKDEKKGDAP. A Phosphoserine; by PHK and PKC modification is found at serine 41. Basic and acidic residues predominate over residues 51–84; sequence LKDEKKGDAPAAEAEAKEKDDAPVADGVEKKEGD. The segment covering 85-97 has biased composition (low complexity); the sequence is GSATTDAAPATSP. A phosphoserine mark is found at serine 86 and serine 96. The segment covering 98-127 has biased composition (basic and acidic residues); that stretch reads KAEEPSKAGDAPSEEKKGEGDAAPSEEKAG. Over residues 128–139 the composition is skewed to low complexity; the sequence is SAETESAAKATT. Residues serine 142, serine 144, and serine 145 each carry the phosphoserine modification. The span at 146 to 158 shows a compositional bias: basic and acidic residues; the sequence is KAEDGPAKEEPKQ. The segment covering 159 to 192 has biased composition (low complexity); that stretch reads ADVPAAVTDAAATTPAAEDAAKAAQPPTETAESS. A Phosphothreonine modification is found at threonine 172. Phosphoserine is present on residues serine 191 and serine 192. Over residues 201 to 214 the composition is skewed to basic and acidic residues; it reads VDEAKPKESARQDE. Residues 215–226 are compositionally biased toward acidic residues; the sequence is GKEDPEADQEHA.

The protein belongs to the neuromodulin family. Identified in a complex containing FGFR4, NCAM1, CDH2, PLCG1, FRS2, SRC, SHC1, GAP43 and CTTN. Interacts (via IQ domain) with calmodulin. Binds calmodulin with a greater affinity in the absence of Ca(2+) than in its presence. Post-translationally, phosphorylated. Phosphorylation of this protein by a protein kinase C is specifically correlated with certain forms of synaptic plasticity. In terms of processing, palmitoylated by ZDHHC3. Palmitoylation is regulated by ARF6 and is essential for plasma membrane association and axonal and dendritic filopodia induction. Deacylated by LYPLA2. As to expression, expressed in hippocampal neurons, with highest levels of expression in the CA4 and CA3 neurons and lower levels in CA1 neurons. Expressed in the dorsal root ganglion.

It is found in the cell membrane. Its subcellular location is the cell projection. The protein resides in the growth cone. It localises to the growth cone membrane. The protein localises to the synapse. It is found in the filopodium membrane. Its subcellular location is the perikaryon. The protein resides in the dendrite. It localises to the axon. The protein localises to the cytoplasm. This protein is associated with nerve growth. It is a major component of the motile 'growth cones' that form the tips of elongating axons. Plays a role in axonal and dendritic filopodia induction. In Rattus norvegicus (Rat), this protein is Neuromodulin (Gap43).